Reading from the N-terminus, the 164-residue chain is Zinc finger A20 and AN1 domain-containing stress-associated protein 1 (164 aa).

An A20-type zinc finger spans residues 16–50; it reads APEITLCANSCGFPGNPATQNLCQNCFLAATASTS. Zn(2+) contacts are provided by Cys-22, Cys-26, Cys-38, and Cys-41. The span at 48–58 shows a compositional bias: low complexity; the sequence is STSSPSSLSSP. Residues 48–81 are disordered; the sequence is STSSPSSLSSPVLDKQPPRPAAPLVEPQAPLPPP. An AN1-type zinc finger spans residues 99-145; it reads TSAVNRCSRCRKRVGLTGFRCRCGHLFCGEHRYSDRHGCSYDYKSAA. Residues Cys-105, Cys-108, Cys-119, Cys-121, Cys-126, His-129, His-135, and Cys-137 each contribute to the Zn(2+) site.

May be involved in environmental stress response. In Oryza sativa subsp. indica (Rice), this protein is Zinc finger A20 and AN1 domain-containing stress-associated protein 1 (SAP1).